We begin with the raw amino-acid sequence, 348 residues long: Dihydroorotase (348 aa).

2 residues coordinate Zn(2+): His-14 and His-16. Substrate contacts are provided by residues 16-18 (HLR) and Asn-42. Zn(2+) is bound by residues Lys-100, His-137, and His-175. Lys-100 bears the N6-carboxylysine mark. His-137 serves as a coordination point for substrate. Leu-220 is a binding site for substrate. Asp-248 provides a ligand contact to Zn(2+). Asp-248 is an active-site residue. The substrate site is built by His-252 and Ala-264.

This sequence belongs to the metallo-dependent hydrolases superfamily. DHOase family. Class II DHOase subfamily. As to quaternary structure, homodimer. Zn(2+) serves as cofactor.

The enzyme catalyses (S)-dihydroorotate + H2O = N-carbamoyl-L-aspartate + H(+). The protein operates within pyrimidine metabolism; UMP biosynthesis via de novo pathway; (S)-dihydroorotate from bicarbonate: step 3/3. Catalyzes the reversible cyclization of carbamoyl aspartate to dihydroorotate. The polypeptide is Dihydroorotase (Synechococcus sp. (strain CC9605)).